The chain runs to 231 residues: Enolase-phosphatase E1 (231 aa).

The protein belongs to the HAD-like hydrolase superfamily. MasA/MtnC family. In terms of assembly, monomer. The cofactor is Mg(2+).

It catalyses the reaction 5-methylsulfanyl-2,3-dioxopentyl phosphate + H2O = 1,2-dihydroxy-5-(methylsulfanyl)pent-1-en-3-one + phosphate. It participates in amino-acid biosynthesis; L-methionine biosynthesis via salvage pathway; L-methionine from S-methyl-5-thio-alpha-D-ribose 1-phosphate: step 3/6. The protein operates within amino-acid biosynthesis; L-methionine biosynthesis via salvage pathway; L-methionine from S-methyl-5-thio-alpha-D-ribose 1-phosphate: step 4/6. Functionally, bifunctional enzyme that catalyzes the enolization of 2,3-diketo-5-methylthiopentyl-1-phosphate (DK-MTP-1-P) into the intermediate 2-hydroxy-3-keto-5-methylthiopentenyl-1-phosphate (HK-MTPenyl-1-P), which is then dephosphorylated to form the acireductone 1,2-dihydroxy-3-keto-5-methylthiopentene (DHK-MTPene). The protein is Enolase-phosphatase E1 of Stenotrophomonas maltophilia (strain K279a).